Consider the following 741-residue polypeptide: MSKRGQPAWQAPEAVDRPKLKLFNSLTRQKEDFVPLDGNNVTWYSCGPTVYDASHMGHARSYISFDILRRILSDYFGYNIHYVMNITDIDDKIIRRARQNHLFDEYAAEAQKLPLDELLGQQKEVLQRFQDTCAKNTDPDKKIMLDKTLQRMNDAVEALTKAVGKGDEREISEKRLLYLNEAKDPISDWLDSLKGAQINDNAVFEALPRYWEDQFHNDMKSLNILPPDVLTRVSEYVPQIVTFIQKIIDNGLAYAANNSVYFDVNGFDKREKHHYAKLVPEAYGDTKSLQEGEGDLSIAEDRLSEKRSANDFALWKASKAGEPWWDSPWGKGRPGWHIECSAMASDIFGPTFDIHTGGVDLKFPHHDNELAQSEAAFNESEWVKYFLHTGHLTIAGCKMSKSLKNFVTIQEALKKHSATQLRLAFLLHSWKDTLDYSENTMEMATQYEKFLNEFFLNVKDLTRHVLSEEPRRQFDAWTEVEAALQKKFSNAQVQVHASLCDNIDTRSALDAIRELVSVSNVYIRDNKTRLNSLLLRNVATYITDLLHVFGAISGPRGGIGFPVSGGSGAQAAGADLETTVLPYVQSLAEFRYLVREQAKTLKAFDILKLCDDLRDNVLPNLGVRLEDKDIGKYAVKLVDRDSLLREREAKLAAEAEKAAEKERKKQAAAEAAAAKEAQRRVNPKEMFLAETEKYSAFDENGLPTHDKEGKEVSKGQIKKLQKLQQQQEQRYNEYLASIEKA.

Cys-46 is a binding site for Zn(2+). A 'HIGH' region motif is present at residues 48 to 58 (PTVYDASHMGH). A Phosphoserine modification is found at Ser-297. Zn(2+) contacts are provided by Cys-340, His-365, and Glu-369. Positions 398 to 402 (KMSKS) match the 'KMSKS' region motif. An ATP-binding site is contributed by Lys-401. The segment at 697–718 (FDENGLPTHDKEGKEVSKGQIK) is disordered. The span at 704–713 (THDKEGKEVS) shows a compositional bias: basic and acidic residues.

The protein belongs to the class-I aminoacyl-tRNA synthetase family. Zn(2+) serves as cofactor.

The protein resides in the cytoplasm. The catalysed reaction is tRNA(Cys) + L-cysteine + ATP = L-cysteinyl-tRNA(Cys) + AMP + diphosphate. This is Cysteine--tRNA ligase, cytoplasmic from Drosophila melanogaster (Fruit fly).